Here is a 276-residue protein sequence, read N- to C-terminus: MSSKSQLTYSARAQSHPNPLARKLFQVAEEKRSNVTVSADVTTTKELLDLADRLGPYIAVIKTHIDILSDFSQETIDGLNALAQKHNFLIFEDRKFIDIGNTVQKQYHNGTLRISEWAHIINCSILPGEGIVEALAQTAQATDFPYGSERGLLILAEMTSKGSLATGAYTSASVDIARKYPSFVLGFVSTRSLGEVESTEAPAQGEDFVVFTTGVNLSSKGDKLGQQYQTPQSAVGRGADFIISGRGIYAAADPVEAAKQYQQQGWEAYLARVGAQ.

Substrate is bound by residues aspartate 40, lysine 62–histidine 64, aspartate 93–threonine 102, tyrosine 228, and arginine 246. Lysine 95 functions as the Proton donor in the catalytic mechanism.

It belongs to the OMP decarboxylase family.

The catalysed reaction is orotidine 5'-phosphate + H(+) = UMP + CO2. It participates in pyrimidine metabolism; UMP biosynthesis via de novo pathway; UMP from orotate: step 2/2. This Penicillium nalgiovense protein is Orotidine 5'-phosphate decarboxylase (pyrG).